Reading from the N-terminus, the 418-residue chain is Tyrosine--tRNA ligase (418 aa).

Tyr38 is a binding site for L-tyrosine. The short motif at Cys43 to Ser52 is the 'HIGH' region element. Residues Tyr175 and Gln179 each contribute to the L-tyrosine site. The 'KMSKS' region signature appears at Lys235–Thr239. Lys238 lines the ATP pocket. The S4 RNA-binding domain occupies Leu348 to Met413.

It belongs to the class-I aminoacyl-tRNA synthetase family. TyrS type 1 subfamily. As to quaternary structure, homodimer.

It localises to the cytoplasm. The enzyme catalyses tRNA(Tyr) + L-tyrosine + ATP = L-tyrosyl-tRNA(Tyr) + AMP + diphosphate + H(+). Functionally, catalyzes the attachment of tyrosine to tRNA(Tyr) in a two-step reaction: tyrosine is first activated by ATP to form Tyr-AMP and then transferred to the acceptor end of tRNA(Tyr). The chain is Tyrosine--tRNA ligase from Ehrlichia chaffeensis (strain ATCC CRL-10679 / Arkansas).